Consider the following 545-residue polypeptide: Chaperonin GroEL 2 (545 aa).

Residues 29-32, 86-90, G414, and D499 each bind ATP; these read TLGP and DGTTT.

Belongs to the chaperonin (HSP60) family. Forms a cylinder of 14 subunits composed of two heptameric rings stacked back-to-back. Interacts with the co-chaperonin GroES.

Its subcellular location is the cytoplasm. It catalyses the reaction ATP + H2O + a folded polypeptide = ADP + phosphate + an unfolded polypeptide.. Together with its co-chaperonin GroES, plays an essential role in assisting protein folding. The GroEL-GroES system forms a nano-cage that allows encapsulation of the non-native substrate proteins and provides a physical environment optimized to promote and accelerate protein folding. In Chloroflexus aurantiacus (strain ATCC 29366 / DSM 635 / J-10-fl), this protein is Chaperonin GroEL 2.